The chain runs to 221 residues: Ribosomal RNA small subunit methyltransferase Nep1 (221 aa).

Residues Gly174, Gly179, and 196–201 (VGDEPL) contribute to the S-adenosyl-L-methionine site.

It belongs to the class IV-like SAM-binding methyltransferase superfamily. RNA methyltransferase NEP1 family. As to quaternary structure, homodimer.

The catalysed reaction is a pseudouridine in rRNA + S-adenosyl-L-methionine = an N(1)-methylpseudouridine in rRNA + S-adenosyl-L-homocysteine + H(+). Functionally, methyltransferase involved in ribosomal biogenesis. Specifically catalyzes the N1-methylation of the pseudouridine corresponding to position 914 in M.jannaschii 16S rRNA. The polypeptide is Ribosomal RNA small subunit methyltransferase Nep1 (Pyrobaculum neutrophilum (strain DSM 2338 / JCM 9278 / NBRC 100436 / V24Sta) (Thermoproteus neutrophilus)).